A 341-amino-acid chain; its full sequence is 4-hydroxy-2-oxovalerate aldolase 3 (341 aa).

Positions 5–257 (ITLHDMTLRD…ETGVDVYRIA (253 aa)) constitute a Pyruvate carboxyltransferase domain. Residue 13–14 (RD) participates in substrate binding. Asp14 provides a ligand contact to Mn(2+). The active-site Proton acceptor is the His17. Substrate contacts are provided by Ser167 and His196. The Mn(2+) site is built by His196 and His198. Residue Tyr287 participates in substrate binding.

Belongs to the 4-hydroxy-2-oxovalerate aldolase family.

The enzyme catalyses (S)-4-hydroxy-2-oxopentanoate = acetaldehyde + pyruvate. In Cupriavidus necator (strain ATCC 17699 / DSM 428 / KCTC 22496 / NCIMB 10442 / H16 / Stanier 337) (Ralstonia eutropha), this protein is 4-hydroxy-2-oxovalerate aldolase 3 (bpHI).